The chain runs to 455 residues: Trigger factor (455 aa).

The PPIase FKBP-type domain occupies 169–262 (GDVAIVDYEG…VKELKAKELP (94 aa)).

Belongs to the FKBP-type PPIase family. Tig subfamily.

It is found in the cytoplasm. The enzyme catalyses [protein]-peptidylproline (omega=180) = [protein]-peptidylproline (omega=0). In terms of biological role, involved in protein export. Acts as a chaperone by maintaining the newly synthesized protein in an open conformation. Functions as a peptidyl-prolyl cis-trans isomerase. The polypeptide is Trigger factor (Rippkaea orientalis (strain PCC 8801 / RF-1) (Cyanothece sp. (strain PCC 8801))).